A 135-amino-acid polypeptide reads, in one-letter code: Large-conductance mechanosensitive channel (135 aa).

The next 2 helical transmembrane spans lie at 9 to 29 (AFAA…GAAF) and 79 to 99 (IQTI…LKAI).

It belongs to the MscL family. As to quaternary structure, homopentamer.

The protein localises to the cell inner membrane. In terms of biological role, channel that opens in response to stretch forces in the membrane lipid bilayer. May participate in the regulation of osmotic pressure changes within the cell. The protein is Large-conductance mechanosensitive channel of Aeromonas salmonicida (strain A449).